We begin with the raw amino-acid sequence, 689 residues long: Elongation factor G (689 aa).

In terms of domain architecture, tr-type G spans 9 to 283; sequence AKFRNIGIMA…AIVEFMPSPL (275 aa). GTP contacts are provided by residues 18–25, 82–86, and 136–139; these read AHIDAGKT, DTPGH, and NKMD.

Belongs to the TRAFAC class translation factor GTPase superfamily. Classic translation factor GTPase family. EF-G/EF-2 subfamily.

The protein localises to the cytoplasm. Functionally, catalyzes the GTP-dependent ribosomal translocation step during translation elongation. During this step, the ribosome changes from the pre-translocational (PRE) to the post-translocational (POST) state as the newly formed A-site-bound peptidyl-tRNA and P-site-bound deacylated tRNA move to the P and E sites, respectively. Catalyzes the coordinated movement of the two tRNA molecules, the mRNA and conformational changes in the ribosome. This Clostridium botulinum (strain Kyoto / Type A2) protein is Elongation factor G.